We begin with the raw amino-acid sequence, 829 residues long: MNSPRPTPPPFAAAAAGLPILVRASNLVTEADVTSLVWNKAPCRFCGTGCSVMVATRDGQVVATHGDIKAEVNRGINCVKGYFLSKIMYGSDRLTRPLLRMKDGKFDKQGEFQPISWEQAFDIMAEKFKAALKAKGPESVGMFGSGQWTVWEGYAANKLFKAGLRSNNIDPNARHCMASAVMGFMRSFGMDEPMGCYDDIEATDSFVLWGSNMAEMHPVLWSRVTDRRLSAPQVKVAVLSTFEHRSFELADLPMVFKPQTDLIILNYIANHIIESGAVNRDFVERHVRFAHGAEDIGYGLRPDDPLEKKAKNADKANTWSDIDFKAFAEFVKPYTLERTARESGVPAERLKALAELYADPKRKVVSFWTMGFNQHTRGVWANNLIYNIHLLTGKISEPGNSPFSLTGQPSACGTAREVGTFSHRLPADLVVTNPKHRETAEKIWKVPAGTIQEKVGFHAVQQSRMLKDGVLNVYWTQVSNNMQAGPNVMQEVLPGWRNPDNFVIVSDVYPTVSAQAADLILPSAMWVEKEGAFGNAERRTQFWHQLVKAPGEAKSDLWQLVEFSKRFTTDEVWPAELLAKAPELKGKTLYDVLFRNGQVDRFPASDLAKGYANDEVDAFGFYIQKGLFEEYAAFGRGHGHDLAPFDAYHEARGLRWPVVDGKETRWRYREGYDPYVSKGSGVQFYGYPDKKAIVFALPYEPPAEAPDQDYPFWLATGRVLEHWHTGSMTARVPELYKAVPDALVYMHPEDARQLKLRRGSEVKVVSRRGEIRARVETRGRNKPPQGLVFVPFFDANKLINKVTLDATDPISKQTDYKKCAVRIELLNLA.

An N-terminal signal peptide occupies residues 1 to 30 (MNSPRPTPPPFAAAAAGLPILVRASNLVTE). One can recognise a 4Fe-4S Mo/W bis-MGD-type domain in the interval 36-92 (LVWNKAPCRFCGTGCSVMVATRDGQVVATHGDIKAEVNRGINCVKGYFLSKIMYGSD). [4Fe-4S] cluster is bound by residues C43, C46, C50, and C78. Mo-bis(molybdopterin guanine dinucleotide) contacts are provided by residues K80, Q147, N172, C176, 209-216 (WGSNMAEM), 240-244 (STFEH), 259-261 (QTD), M370, Q374, N480, 506-507 (SD), K529, D556, and 716-725 (TGRVLEHWHT). F792 is a substrate binding site. Residues N800 and K817 each coordinate Mo-bis(molybdopterin guanine dinucleotide).

It belongs to the prokaryotic molybdopterin-containing oxidoreductase family. NasA/NapA/NarB subfamily. As to quaternary structure, component of the periplasmic nitrate reductase NapAB complex composed of NapA and NapB. It depends on [4Fe-4S] cluster as a cofactor. Requires Mo-bis(molybdopterin guanine dinucleotide) as cofactor.

The protein resides in the periplasm. The enzyme catalyses 2 Fe(II)-[cytochrome] + nitrate + 2 H(+) = 2 Fe(III)-[cytochrome] + nitrite + H2O. In terms of biological role, catalytic subunit of the periplasmic nitrate reductase complex NapAB. Receives electrons from NapB and catalyzes the reduction of nitrate to nitrite. This is Periplasmic nitrate reductase from Pseudomonas aeruginosa (strain ATCC 15692 / DSM 22644 / CIP 104116 / JCM 14847 / LMG 12228 / 1C / PRS 101 / PAO1).